Here is a 288-residue protein sequence, read N- to C-terminus: Programmed cell death protein 1 (288 aa).

The first 24 residues, 1–24 (MQIPQAPWPVVWAVLQLGWRPGWF), serve as a signal peptide directing secretion. The nivolumab binding stretch occupies residues 25–34 (LDSPDRPWNP). Topologically, residues 25-170 (LDSPDRPWNP…RPAGQFQTLV (146 aa)) are extracellular. Residues 35-145 (PTFSPALLVV…ESLRAELRVT (111 aa)) enclose the Ig-like V-type domain. Asn49, Asn58, Asn74, and Asn116 each carry an N-linked (GlcNAc...) asparagine glycan. Cysteines 54 and 123 form a disulfide. The tract at residues 70 to 77 (MSPSNQTD) is interaction with CD274/PDCD1L1. The interval 74-99 (NQTDKLAAFPEDRSQPGQDCRFRVTQ) is pembrolizumab binding. The helical transmembrane segment at 171 to 191 (VGVVGGLLGSLVLLVWVLAVI) threads the bilayer. The Cytoplasmic portion of the chain corresponds to 192–288 (CSRAARGTIG…PEDGHCSWPL (97 aa)). Positions 221 to 226 (VDYGEL) match the ITIM motif motif. Tyr223 carries the phosphotyrosine modification. A Glycyl lysine isopeptide (Lys-Gly) (interchain with G-Cter in ubiquitin) cross-link involves residue Lys233. Thr234 carries the phosphothreonine; by MAPK3 modification. The ITSM motif motif lies at 247–251 (EYATI). Tyr248 bears the Phosphotyrosine mark. The disordered stretch occupies residues 254–288 (PSGMGTSSPARRGSADGPRSAQPLRPEDGHCSWPL). Over residues 278–288 (RPEDGHCSWPL) the composition is skewed to basic and acidic residues.

Monomer. Interacts with CD274/PDCD1L1. Interacts with CD273/PDCD1LG2. Interacts with FBXO38; leading to ubiquitination and degradation of PDCD1 by the proteasome. In terms of processing, ubiquitinated at Lys-233 by the SCF(FBXO38) complex, leading to its proteasomal degradation. Ubiquitinated via 'Lys-48'-linked polyubiquitin chains. Deubiquitinated and thus stabilized by USP5. Tyrosine phosphorylated at Tyr-223 (within ITIM motif) and Tyr-248 (ITSM motif) upon ligand binding. Phosphorylation at Tyr-248 promotes the recruitment of the protein tyrosine phosphatase PTPN11/SHP-2 that mediates dephosphorylation of key TCR proximal signaling molecules, such as ZAP70, PRKCQ/PKCtheta and CD247/CD3zeta. Phosphorylation at Thr-234 promotes the recruitment of the deubiquitinase USP5. Post-translationally, N-glycosylation at Asn-58 contains at least two N-acetylglucosamine units and one fucose. N-glycosylation does not affect binding to nivolumab drug.

It is found in the cell membrane. Its activity is regulated as follows. Inhibited by pembrolizumab (also named MK-3475 or lambrolizumab), a monoclonal antibody that prevents the interaction with CD274/PDCD1L1. Inhibited by nivolumab (also named ONO-4538, BMS-936558 or Opdivo), a monoclonal antibody that prevents the interaction with CD274/PDCD1L1. The interaction with nivolumab is not dependent on glycosylation and depends on a loop at the N-terminus (N-terminal loop, corresponding to residues 25-34). Targeting the interaction between PDCD1 and CD274/PDCD1L1 with pembrolizumab and nivolumab antibodies has demonstrated great promise as a strategy for controlling and eradicating cancer. Pembrolizumab and nivolumab are used for treatment of patients with advanced melanoma. These antibodies are also effective against other cancers, such as non-small cell lung cancer, renal cell carcinoma, bladder cancer and Hodgkin's lymphoma. In terms of biological role, inhibitory receptor on antigen activated T-cells that plays a critical role in induction and maintenance of immune tolerance to self. Delivers inhibitory signals upon binding to ligands CD274/PDCD1L1 and CD273/PDCD1LG2. Following T-cell receptor (TCR) engagement, PDCD1 associates with CD3-TCR in the immunological synapse and directly inhibits T-cell activation. Suppresses T-cell activation through the recruitment of PTPN11/SHP-2: following ligand-binding, PDCD1 is phosphorylated within the ITSM motif, leading to the recruitment of the protein tyrosine phosphatase PTPN11/SHP-2 that mediates dephosphorylation of key TCR proximal signaling molecules, such as ZAP70, PRKCQ/PKCtheta and CD247/CD3zeta. Its function is as follows. The PDCD1-mediated inhibitory pathway is exploited by tumors to attenuate anti-tumor immunity and escape destruction by the immune system, thereby facilitating tumor survival. The interaction with CD274/PDCD1L1 inhibits cytotoxic T lymphocytes (CTLs) effector function. The blockage of the PDCD1-mediated pathway results in the reversal of the exhausted T-cell phenotype and the normalization of the anti-tumor response, providing a rationale for cancer immunotherapy. The polypeptide is Programmed cell death protein 1 (Homo sapiens (Human)).